The following is a 190-amino-acid chain: MDKNYIKAAIEAILFAWSDPISSSELSNILDIKVTETKEIMKEMIDEFNFHKRGIQIIQMNDHYQMSTRAEYHEILQKLFEPKQNKGLTQASLETLAIIAYRQPITKTEIESVRGVKCDKAISTLFEKNLIEDRGRLEKTGRPILFGTTLHFLKNFGLKSLEDLPKITEIDQANEEELIKDIYNQQLKGR.

Belongs to the ScpB family. As to quaternary structure, homodimer. Homodimerization may be required to stabilize the binding of ScpA to the Smc head domains. Component of a cohesin-like complex composed of ScpA, ScpB and the Smc homodimer, in which ScpA and ScpB bind to the head domain of Smc. The presence of the three proteins is required for the association of the complex with DNA.

Its subcellular location is the cytoplasm. Participates in chromosomal partition during cell division. May act via the formation of a condensin-like complex containing Smc and ScpA that pull DNA away from mid-cell into both cell halves. This chain is Segregation and condensation protein B, found in Alkaliphilus metalliredigens (strain QYMF).